A 196-amino-acid polypeptide reads, in one-letter code: Probable nicotinate-nucleotide adenylyltransferase (196 aa).

It belongs to the NadD family.

It catalyses the reaction nicotinate beta-D-ribonucleotide + ATP + H(+) = deamido-NAD(+) + diphosphate. The protein operates within cofactor biosynthesis; NAD(+) biosynthesis; deamido-NAD(+) from nicotinate D-ribonucleotide: step 1/1. In terms of biological role, catalyzes the reversible adenylation of nicotinate mononucleotide (NaMN) to nicotinic acid adenine dinucleotide (NaAD). The sequence is that of Probable nicotinate-nucleotide adenylyltransferase from Thermotoga petrophila (strain ATCC BAA-488 / DSM 13995 / JCM 10881 / RKU-1).